The sequence spans 168 residues: ATP synthase F(1) complex subunit delta, mitochondrial (168 aa).

Residues 1–22 (MLPAALLRRPGLGRLVRHARAY) constitute a mitochondrion transit peptide. An N6-acetyllysine; alternate mark is found at Lys-136 and Lys-165. N6-succinyllysine; alternate is present on residues Lys-136 and Lys-165.

Belongs to the ATPase epsilon chain family. Component of the ATP synthase complex composed at least of ATP5F1A/subunit alpha, ATP5F1B/subunit beta, ATP5MC1/subunit c (homooctomer), MT-ATP6/subunit a, MT-ATP8/subunit 8, ATP5ME/subunit e, ATP5MF/subunit f, ATP5MG/subunit g, ATP5MK/subunit k, ATP5MJ/subunit j, ATP5F1C/subunit gamma, ATP5F1D/subunit delta, ATP5F1E/subunit epsilon, ATP5PF/subunit F6, ATP5PB/subunit b, ATP5PD/subunit d, ATP5PO/subunit OSCP. ATP synthase complex consists of a soluble F(1) head domain (subunits alpha(3) and beta(3)) - the catalytic core - and a membrane F(0) domain - the membrane proton channel (subunits c, a, 8, e, f, g, k and j). These two domains are linked by a central stalk (subunits gamma, delta, and epsilon) rotating inside the F1 region and a stationary peripheral stalk (subunits F6, b, d, and OSCP). Component of a complex composed at least by ATPIF1, ATP5F1A, ATP5F1B, ATP5F1C AND ATP5F1E.

The protein localises to the mitochondrion. It localises to the mitochondrion inner membrane. In terms of biological role, subunit delta, of the mitochondrial membrane ATP synthase complex (F(1)F(0) ATP synthase or Complex V) that produces ATP from ADP in the presence of a proton gradient across the membrane which is generated by electron transport complexes of the respiratory chain. ATP synthase complex consist of a soluble F(1) head domain - the catalytic core - and a membrane F(1) domain - the membrane proton channel. These two domains are linked by a central stalk rotating inside the F(1) region and a stationary peripheral stalk. During catalysis, ATP synthesis in the catalytic domain of F(1) is coupled via a rotary mechanism of the central stalk subunits to proton translocation. In vivo, can only synthesize ATP although its ATP hydrolase activity can be activated artificially in vitro. With the central stalk subunit gamma, is essential for the biogenesis of F(1) catalytic part of the ATP synthase complex namely in the formation of F1 assembly intermediate. The chain is ATP synthase F(1) complex subunit delta, mitochondrial from Homo sapiens (Human).